A 228-amino-acid polypeptide reads, in one-letter code: Claudin-10 (228 aa).

Residues methionine 1–valine 21 form a helical membrane-spanning segment. Topologically, residues serine 22 to arginine 80 are extracellular. The helical transmembrane segment at glycine 81–methionine 101 threads the bilayer. At lysine 102–lysine 115 the chain is on the cytoplasmic side. Residues isoleucine 116–serine 136 traverse the membrane as a helical segment. The Extracellular portion of the chain corresponds to leucine 137–alanine 160. Residues alanine 161–phenylalanine 181 traverse the membrane as a helical segment. Topologically, residues serine 182–valine 228 are cytoplasmic.

It belongs to the claudin family. Can form homodimers both in trans (interaction between CLDN10 molecules in opposing membranes) and in cis (interaction between CLDN10 molecules within one membrane). As to quaternary structure, interacts with CLDN19. Expressed in the kidney, eccrine sweat glands and in all layers of the epidermis. In the kidney, it is detected in the thick ascending limb of Henle's loop (TAL). In the sweat glands, it is expressed in cells from secretory portions, corresponding to the clear cells.

It localises to the cell junction. It is found in the tight junction. The protein localises to the cell membrane. It carries out the reaction Na(+)(in) = Na(+)(out). The enzyme catalyses Li(+)(in) = Li(+)(out). The catalysed reaction is K(+)(in) = K(+)(out). It catalyses the reaction Rb(+)(in) = Rb(+)(out). It carries out the reaction Cs(+)(in) = Cs(+)(out). The enzyme catalyses NH4(+)(in) = NH4(+)(out). The catalysed reaction is methylamine(out) = methylamine(in). It catalyses the reaction Mg(2+)(in) = Mg(2+)(out). It carries out the reaction Ca(2+)(in) = Ca(2+)(out). The enzyme catalyses Sr(2+)(in) = Sr(2+)(out). The catalysed reaction is chloride(in) = chloride(out). It catalyses the reaction nitrate(in) = nitrate(out). Forms paracellular channels: polymerizes in tight junction strands with cation- and anion-selective channels through the strands, conveying epithelial permeability in a process known as paracellular tight junction permeability. Functionally, forms cation-selective paracellular channels. In sweat glands and in the thick ascending limb (TAL) of Henle's loop in kidney, it controls paracellular sodium permeability which is essential for proper sweat production and renal function. In terms of biological role, forms anion-selective paracellular channels. In renal proximal tubules, it conveys selective chloride over hydrogencarbonate anion permeability which is required for renal chloride reabsorption and salt homeostasis. The protein is Claudin-10 of Homo sapiens (Human).